The primary structure comprises 407 residues: Zinc finger protein 260 (407 aa).

The tract at residues 1 to 21 (MLESLQPESELLHDEPDPGEK) is disordered. Residues 10–21 (ELLHDEPDPGEK) show a composition bias toward basic and acidic residues. Residues 23–45 (YECDECRKTFSLEQHFVEHKKTH) form a C2H2-type 1 zinc finger. The C2H2-type 2; degenerate zinc finger occupies 51-73 (PECTGCGEEFSKASSLTRHLRSR). C2H2-type zinc fingers lie at residues 79–101 (YKCG…QKQH), 131–153 (YACK…EKIH), 159–181 (FECN…QNVH), 187–209 (FKCN…QRIH), 215–237 (YECK…QRSH), 243–265 (YTCK…EKIH), 271–293 (YKCN…HNIH), 299–321 (YECN…VRIH), 327–349 (YECK…MRSH), 355–377 (YGCN…MRIH), and 383–405 (YQCS…QRIH).

It belongs to the krueppel C2H2-type zinc-finger protein family. As to quaternary structure, binds DNA. Interacts with GATA4. In terms of tissue distribution, expressed in both embryonic, fetal and adult heart. Also expressed in lung, skeletal muscle and adrenal glands.

The protein resides in the nucleus. Functionally, transcription factor that acts as a cardiac regulator and an effector of alpha1-adrenergic signaling. Binds to PE response elements (PERE) present in the promoter of genes such as ANF/NPPA and acts as a direct transcriptional activator of NPPA. Also acts as a cofactor with GATA4, a key cardiac regulator. This chain is Zinc finger protein 260 (Znf260), found in Rattus norvegicus (Rat).